The sequence spans 289 residues: MWFQLKIEHCPNDKIEEITEELEEYGALSITLTDKNDNPVLEPEPGTTPLWPEVIIHALFAQAEEAQYVREQLVAKTPSLHCSLEPLADKNWERAWMDDFRPQRFGNRLWVCPTWLPPPEPDAVNLMLDPGLAFGTGTHATTSLCLTWLEQADLKNKSVIDYGCGSGILSLAAIKLGAKHVYAVDIDNQALQATQNNAHANHITESQLSISSPEALQNPVHLIIANILLAPLISLKERFHQLLPSGAHLVTSGILEEQAPLLIDAYDSAFTHIATEYCEGWSLLVFTSK.

The S-adenosyl-L-methionine site is built by Thr142, Gly163, Asp185, and Asn226.

The protein belongs to the methyltransferase superfamily. PrmA family.

The protein resides in the cytoplasm. It catalyses the reaction L-lysyl-[protein] + 3 S-adenosyl-L-methionine = N(6),N(6),N(6)-trimethyl-L-lysyl-[protein] + 3 S-adenosyl-L-homocysteine + 3 H(+). Its function is as follows. Methylates ribosomal protein L11. The protein is Ribosomal protein L11 methyltransferase of Legionella pneumophila (strain Corby).